Consider the following 991-residue polypeptide: KAT8 regulatory NSL complex subunit 1-like protein (991 aa).

Residue Lys-136 forms a Glycyl lysine isopeptide (Lys-Gly) (interchain with G-Cter in SUMO2) linkage. The interval 443 to 462 is disordered; the sequence is VNSQVPQRSEEPLPEHDFEM. The segment covering 450–461 has biased composition (basic and acidic residues); sequence RSEEPLPEHDFE. Residue Ser-463 is modified to Phosphoserine. Residues 749–763 show a composition bias toward polar residues; the sequence is ANVTSRTQNPSSQNT. The disordered stretch occupies residues 749-770; the sequence is ANVTSRTQNPSSQNTSRRRLRS. One can recognise a PEHE domain in the interval 798 to 919; the sequence is EILTPRWRKV…DGQEDKSLRW (122 aa). N6-acetyllysine is present on Lys-863.

In terms of processing, acetylated on lysine residues by KAT8 upon ionizing radiation-induced DNA damage; deacetylated by HDAC3.

This Mus musculus (Mouse) protein is KAT8 regulatory NSL complex subunit 1-like protein (Kansl1l).